The primary structure comprises 23 residues: Mu-conotoxin-like SxIIIB (23 aa).

At Q1 the chain carries Pyrrolidone carboxylic acid. 3 cysteine pairs are disulfide-bonded: C3–C16, C4–C21, and C11–C22. Residue A23 is modified to Alanine amide.

This sequence belongs to the conotoxin M superfamily. As to expression, expressed by the venom duct.

It is found in the secreted. Its function is as follows. Mu-conotoxins block voltage-gated sodium channels (Nav). The polypeptide is Mu-conotoxin-like SxIIIB (Conus striolatus (Cone snail)).